The sequence spans 247 residues: Eukaryotic translation initiation factor 6 (247 aa).

A phosphoserine; by CK1 mark is found at serine 174 and serine 175.

The protein belongs to the eIF-6 family. Monomer. Associates with the 60S ribosomal subunit. Post-translationally, phosphorylation at Ser-174 and Ser-175 promotes nuclear export.

It localises to the cytoplasm. The protein resides in the nucleus. Its subcellular location is the nucleolus. In terms of biological role, binds to the 60S ribosomal subunit and prevents its association with the 40S ribosomal subunit to form the 80S initiation complex in the cytoplasm. Is also involved in ribosome biogenesis. Associates with pre-60S subunits in the nucleus and is involved in its nuclear export. The polypeptide is Eukaryotic translation initiation factor 6 (tif6) (Talaromyces stipitatus (strain ATCC 10500 / CBS 375.48 / QM 6759 / NRRL 1006) (Penicillium stipitatum)).